We begin with the raw amino-acid sequence, 1240 residues long: ABC transporter B family member 15 (1240 aa).

The next 6 helical transmembrane spans lie at 35 to 55, 82 to 102, 158 to 180, 184 to 206, 264 to 284, and 296 to 316; these read MGLG…VLLI, VALL…GYCW, LPNF…ILLW, IVGL…ALIS, GITI…SWYG, and GTVF…GGGL. Residues 35–324 form the ABC transmembrane type-1 1 domain; the sequence is MGLGLIGAVG…GLSNLKYFFE (290 aa). The ABC transporter 1 domain occupies 359-595; that stretch reads VEFKNVKFVY…IDGQYSTLVH (237 aa). 394–401 is an ATP binding site; that stretch reads GGSGSGKS. Asparagine 542, asparagine 605, and asparagine 622 each carry an N-linked (GlcNAc...) asparagine glycan. The disordered stretch occupies residues 617–646; that stretch reads SKDIRNSSRVSTLSRSSSANSVTGPSTIKN. A compositionally biased stretch (low complexity) spans 623 to 639; that stretch reads SSRVSTLSRSSSANSVT. Residue asparagine 646 is glycosylated (N-linked (GlcNAc...) asparagine). The ABC transmembrane type-1 2 domain occupies 672 to 960; that stretch reads ALYGCISATL…AGSMTTDLAK (289 aa). Helical transmembrane passes span 681-701 and 714-734; these read LFGA…SVYF and IYAL…ISQH. N-linked (GlcNAc...) asparagine glycosylation occurs at asparagine 769. 4 helical membrane-spanning segments follow: residues 794 to 813, 817 to 839, 895 to 915, and 923 to 943; these read ALVV…GLVI, LALV…RVLL, SWFA…TWAL, and LIQD…ILVS. The region spanning 995–1233 is the ABC transporter 2 domain; it reads VEFLDVDFSY…GPTGIYFSLV (239 aa). Residue asparagine 1015 is glycosylated (N-linked (GlcNAc...) asparagine). Residue 1030–1037 participates in ATP binding; the sequence is GPSGSGKS.

Belongs to the ABC transporter superfamily. ABCB family. Multidrug resistance exporter (TC 3.A.1.201) subfamily.

It is found in the membrane. The sequence is that of ABC transporter B family member 15 (ABCB15) from Arabidopsis thaliana (Mouse-ear cress).